Here is a 566-residue protein sequence, read N- to C-terminus: 4-hydroxy-7-methoxy-3-oxo-3,4-dihydro-2H-1,4-benzoxazin-2-yl glucoside beta-D-glucosidase 1, chloroplastic (566 aa).

Residues 1-54 (MAPLLAAAMNHAAAHPGLRSHLVGPNNESFSRHHLPSSSPQSSKRRCNLSFTTR) constitute a chloroplast transit peptide. The tract at residues 17–47 (GLRSHLVGPNNESFSRHHLPSSSPQSSKRRC) is disordered. A beta-D-glucoside-binding positions include glutamine 92, histidine 196, and 244–245 (NE). The active-site Proton donor is glutamate 245. The cysteines at positions 264 and 270 are disulfide-linked. The segment at 325-361 (SFLDKQAEERSWDINLGWFLEPVVRGDYPFSMRSLAR) is dimerization. Tyrosine 387 contributes to the a beta-D-glucoside binding site. Dimerization regions lie at residues 394 to 405 (NIDISPNYSPVL) and 450 to 453 (KYGN). A beta-D-glucoside is bound by residues glutamate 460, tryptophan 511, 518–519 (EW), and tyrosine 527. Glutamate 460 functions as the Nucleophile in the catalytic mechanism.

Belongs to the glycosyl hydrolase 1 family. As to quaternary structure, homo- and heterodimer. As to expression, expressed in all seedling parts. Most abundant in the coleoptile.

The protein resides in the plastid. Its subcellular location is the chloroplast. It carries out the reaction Hydrolysis of terminal, non-reducing beta-D-glucosyl residues with release of beta-D-glucose.. The enzyme catalyses DIMBOA beta-D-glucoside + H2O = DIMBOA + D-glucose. The catalysed reaction is DIBOA beta-D-glucoside + H2O = DIBOA + D-glucose. Reversibly inhibited by micromolar concentrations of Hg(2+) or Ag(+), but irreversibly inhibited by alkylation in presence of urea. Competitive inhibition by p-nitrophenyl beta-D-thioglucoside (pNPTGlc), glucotetrazole, and para-hydroxy-S-mandelonitrile beta-glucoside (dhurrin). Its function is as follows. Is implicated in many functions such as ABA metabolism, hydrolysis of conjugated gibberellins, conversion of storage forms of cytokinins to active forms. Also acts in defense of young plant parts against pests via the production of hydroxamic acids from hydroxamic acid glucosides. Enzymatic activity is highly correlated with plant growth. The preferred substrate is DIMBOA-beta-D-glucoside. Hydrolyzes the chromogenic substrate 6-bromo-2-naphthyl-beta-D-glucoside (6BNGlc) and various artificial aryl beta-glucosides. No activity with cellobiose, arbutin, gentiobiose, linamarin or dhurrin as substrates. The protein is 4-hydroxy-7-methoxy-3-oxo-3,4-dihydro-2H-1,4-benzoxazin-2-yl glucoside beta-D-glucosidase 1, chloroplastic (GLU1) of Zea mays (Maize).